A 299-amino-acid chain; its full sequence is NmrA-like family domain-containing protein 1 (299 aa).

Residues 11 to 16 (GGTGAQ), 37 to 41 (RNPRK), 58 to 59 (DQ), glutamine 62, 79 to 81 (TNY), lysine 92, lysine 133, and 155 to 158 (YFEN) contribute to the NADP(+) site. Residues 153-189 (PCYFENLLSHFLPQKAPDGKSYLLSLPTGDVPMDGMS) form an interaction with ASS1 region.

It belongs to the NmrA-type oxidoreductase family. As to quaternary structure, homodimer. Interacts with ASS1. Interaction is enhanced by low NADPH/NADP(+) ratios, which results in inhibition of ASS1 activity.

The protein localises to the cytoplasm. Its subcellular location is the perinuclear region. The protein resides in the nucleus. In terms of biological role, redox sensor protein. Undergoes restructuring and subcellular redistribution in response to changes in intracellular NADPH/NADP(+) levels. At low NADPH concentrations the protein is found mainly as a monomer, and binds argininosuccinate synthase (ASS1), the enzyme involved in nitric oxide synthesis. Association with ASS1 impairs its activity and reduces the production of nitric oxide, which subsecuently prevents apoptosis. Under normal NADPH concentrations, the protein is found as a dimer and hides the binding site for ASS1. The homodimer binds one molecule of NADPH. Has higher affinity for NADPH than for NADP(+). Binding to NADPH is necessary to form a stable dimer. In Homo sapiens (Human), this protein is NmrA-like family domain-containing protein 1 (NMRAL1).